We begin with the raw amino-acid sequence, 124 residues long: Small ribosomal subunit protein uS12 (124 aa).

Positions 1-32 (MPTIQQLVRKGRKDKATKTKTPALKGSPQRRG) are disordered. 3-methylthioaspartic acid is present on Asp-89. The disordered stretch occupies residues 105–124 (QGVRGRQQARSRYGAKKEKK). Residues 111-124 (QQARSRYGAKKEKK) are compositionally biased toward basic residues.

This sequence belongs to the universal ribosomal protein uS12 family. Part of the 30S ribosomal subunit. Contacts proteins S8 and S17. May interact with IF1 in the 30S initiation complex.

Functionally, with S4 and S5 plays an important role in translational accuracy. In terms of biological role, interacts with and stabilizes bases of the 16S rRNA that are involved in tRNA selection in the A site and with the mRNA backbone. Located at the interface of the 30S and 50S subunits, it traverses the body of the 30S subunit contacting proteins on the other side and probably holding the rRNA structure together. The combined cluster of proteins S8, S12 and S17 appears to hold together the shoulder and platform of the 30S subunit. The sequence is that of Small ribosomal subunit protein uS12 from Beutenbergia cavernae (strain ATCC BAA-8 / DSM 12333 / CCUG 43141 / JCM 11478 / NBRC 16432 / NCIMB 13614 / HKI 0122).